The chain runs to 363 residues: Lipoyl synthase (363 aa).

[4Fe-4S] cluster contacts are provided by cysteine 55, cysteine 60, cysteine 66, cysteine 81, cysteine 85, cysteine 88, and serine 292. In terms of domain architecture, Radical SAM core spans 67–281; that stretch reads WESREATFLI…SKLAKELGFG (215 aa). The tract at residues 338–363 is disordered; that stretch reads PSEETPVTTRMAKTPAQSNSVAATIR. The segment covering 352-363 has biased composition (polar residues); sequence PAQSNSVAATIR.

It belongs to the radical SAM superfamily. Lipoyl synthase family. [4Fe-4S] cluster serves as cofactor.

It is found in the cytoplasm. The catalysed reaction is [[Fe-S] cluster scaffold protein carrying a second [4Fe-4S](2+) cluster] + N(6)-octanoyl-L-lysyl-[protein] + 2 oxidized [2Fe-2S]-[ferredoxin] + 2 S-adenosyl-L-methionine + 4 H(+) = [[Fe-S] cluster scaffold protein] + N(6)-[(R)-dihydrolipoyl]-L-lysyl-[protein] + 4 Fe(3+) + 2 hydrogen sulfide + 2 5'-deoxyadenosine + 2 L-methionine + 2 reduced [2Fe-2S]-[ferredoxin]. It functions in the pathway protein modification; protein lipoylation via endogenous pathway; protein N(6)-(lipoyl)lysine from octanoyl-[acyl-carrier-protein]: step 2/2. Its function is as follows. Catalyzes the radical-mediated insertion of two sulfur atoms into the C-6 and C-8 positions of the octanoyl moiety bound to the lipoyl domains of lipoate-dependent enzymes, thereby converting the octanoylated domains into lipoylated derivatives. This chain is Lipoyl synthase, found in Corynebacterium aurimucosum (strain ATCC 700975 / DSM 44827 / CIP 107346 / CN-1) (Corynebacterium nigricans).